The chain runs to 911 residues: MDWHSFRIAALLLTSLVVLEVNSEFQIQVRDHNAKNGTIKWHSIRRQKREWIKFAAACREGEDNSKRNPIAKIHSDCAANQPVTYRISGVGIDQPPYGIFIINQKTGEINITSIVDREVTPFFIIYCRALNAQGQDLENPLELRVRVMDINDNPPVFSMTTFLGQIEENSNANTLVMKLNATDADEPNNLNSMIAFKIIRQEPSDSPMFTINRKTGEIRTMNNFLDREQYSQYSLVVRGSDRDGGADGMSAESECSITILDVNDNIPYLEQSSYDITIEENTLHSQLLQIRVIDLDEEFSDNWKAIIFFISGNEGNWFEIEMNERTNVGTLKVVKPLDYEAVKNLQLCIGVRNVAEFHQSIISQYRLTVTLITVTVLNVVKGCVFQPGSKTFIVDSRMEANHTVGEFLATDCETGQATNKFKNVRYRYVMGNNPENLLVVDSGIITLRNRVTMEQYERLNKRYEGTVLSIHDSLQRTCTGTIIMVLCGFWTTTEHPTTSTEKPVTLSITPNVDNVHFGPAGIGLLIMGFLVLGLVPFLLISCDCGGAPGGGAGFEPVPECSDGAIHTWAVEGPQPGGITTICVPQMPPGNANVIEYIDNSGVYTNEYCGREMQDLGGGERTTGFELMDGVKTSAAPEICQEYSGTLRRNSMRECRDGGLNMNFMESYFCQKAYAYADEDEGRPSNDCLLIYDIEGVGSPAGSVGCCSFIEDLDESFLDTLGPKFKKLADISLGKEIDSYPDPDPSWPPQSTEPICPQHMEQLASGHPSISPHFGKTTVISENAYPSGPGVQHPMLIPDPLGYGNITVRESYTTSGTLKPSVHFHDNQQASNVVVTERVVGPISGADLHGMLEIPALRDGTNVIVTERVIAPGSSLPNSLTIPNPRETSNVVVTERVIQPTSGMIGNLSIPP.

Positions 1 to 23 (MDWHSFRIAALLLTSLVVLEVNS) are cleaved as a signal peptide. Residues 24 to 49 (EFQIQVRDHNAKNGTIKWHSIRRQKR) constitute a propeptide that is removed on maturation. 3 consecutive Cadherin domains span residues 50-157 (EWIK…PPVF), 158-269 (SMTT…IPYL), and 270-389 (EQSS…QPGS). Residues 50-519 (EWIKFAAACR…PNVDNVHFGP (470 aa)) are Extracellular-facing. Asn-110 is a glycosylation site (N-linked (GlcNAc...) (high mannose) asparagine). The N-linked (GlcNAc...) asparagine glycan is linked to Asn-180. An N-linked (GlcNAc...) asparagine glycan is attached at Asn-401. A helical membrane pass occupies residues 520–540 (AGIGLLIMGFLVLGLVPFLLI). The Cytoplasmic portion of the chain corresponds to 541 to 911 (SCDCGGAPGG…GMIGNLSIPP (371 aa)). Desmoglein repeat repeat units follow at residues 783–809 (AYPSGPGVQHPMLIPDPLGYGNITVRE), 810–839 (SYTTSGTLKPSVHFHDNQQASNVVVTERVV), 840–869 (GPISGADLHGMLEIPALRDGTNVIVTERVI), and 870–897 (APGSSLPNSLTIPNPRETSNVVVTERVI). Residues 898–911 (QPTSGMIGNLSIPP) form a Desmoglein repeat 5; truncated repeat.

In terms of assembly, interacts with DSC3; there is evidence to suggest that the interaction promotes cell-cell adhesion of keratinocytes. In terms of tissue distribution, expressed in epidermis, brain, liver, skeletal, muscle and testis.

It localises to the cell membrane. Its subcellular location is the cell junction. It is found in the desmosome. The protein resides in the cytoplasm. The protein localises to the nucleus. Its function is as follows. Component of intercellular desmosome junctions. Involved in the interaction of plaque proteins and intermediate filaments mediating cell-cell adhesion. This is Desmoglein-1-gamma (Dsg1c) from Mus musculus (Mouse).